Reading from the N-terminus, the 131-residue chain is Large ribosomal subunit protein bL17 (131 aa).

It belongs to the bacterial ribosomal protein bL17 family. As to quaternary structure, part of the 50S ribosomal subunit. Contacts protein L32.

The sequence is that of Large ribosomal subunit protein bL17 from Herminiimonas arsenicoxydans.